The following is a 218-amino-acid chain: MKFFVDTADIAEIRELADTGLLDGVTTNPSLIAKSGRNFLEVVEEICGVVEGPVSAEVTALDAPTMIEEGRKLAKIAKNIAVKVPLTWDGLKTCKVLTGEGTMVNVTLCFSANQALLAAKAGATFISPFIGRLDDINLDGMELIHEIREIYDNYPALETEILAASIRSANHVKDAALAGADVATVPPAVLKGLAAHPLTDKGLEMFMADWKKTGQKIL.

Lysine 83 serves as the catalytic Schiff-base intermediate with substrate.

It belongs to the transaldolase family. Type 3B subfamily.

The protein localises to the cytoplasm. The catalysed reaction is D-sedoheptulose 7-phosphate + D-glyceraldehyde 3-phosphate = D-erythrose 4-phosphate + beta-D-fructose 6-phosphate. The protein operates within carbohydrate degradation; pentose phosphate pathway; D-glyceraldehyde 3-phosphate and beta-D-fructose 6-phosphate from D-ribose 5-phosphate and D-xylulose 5-phosphate (non-oxidative stage): step 2/3. In terms of biological role, transaldolase is important for the balance of metabolites in the pentose-phosphate pathway. In Parvibaculum lavamentivorans (strain DS-1 / DSM 13023 / NCIMB 13966), this protein is Probable transaldolase.